We begin with the raw amino-acid sequence, 203 residues long: Glutathione S-transferase 2 (203 aa).

Residues 1–78 (MPKVVFHYFG…YLGRKYGLAG (78 aa)) enclose the GST N-terminal domain. Glutathione contacts are provided by residues Tyr-8, Trp-38, Lys-42, 48–50 (GQM), and 62–63 (QS). In terms of domain architecture, GST C-terminal spans 80-203 (DIEEDFEIDQ…YLDSAPKKEF (124 aa)).

Belongs to the GST superfamily. Sigma family. In terms of assembly, homodimer.

The enzyme catalyses RX + glutathione = an S-substituted glutathione + a halide anion + H(+). Conjugation of reduced glutathione to a wide number of exogenous and endogenous hydrophobic electrophiles. This chain is Glutathione S-transferase 2 (GST2), found in Manduca sexta (Tobacco hawkmoth).